A 258-amino-acid polypeptide reads, in one-letter code: UPF0246 protein MS0374 (258 aa).

This sequence belongs to the UPF0246 family.

This is UPF0246 protein MS0374 from Mannheimia succiniciproducens (strain KCTC 0769BP / MBEL55E).